Here is a 347-residue protein sequence, read N- to C-terminus: Quinolinate synthase (347 aa).

Residues His-47 and Ser-68 each coordinate iminosuccinate. Residue Cys-113 participates in [4Fe-4S] cluster binding. Residues 139-141 (YAN) and Ser-156 each bind iminosuccinate. Cys-200 contacts [4Fe-4S] cluster. Iminosuccinate-binding positions include 226-228 (HPE) and Thr-243. A [4Fe-4S] cluster-binding site is contributed by Cys-297.

It belongs to the quinolinate synthase family. Type 1 subfamily. [4Fe-4S] cluster is required as a cofactor.

It is found in the cytoplasm. It carries out the reaction iminosuccinate + dihydroxyacetone phosphate = quinolinate + phosphate + 2 H2O + H(+). The protein operates within cofactor biosynthesis; NAD(+) biosynthesis; quinolinate from iminoaspartate: step 1/1. Its function is as follows. Catalyzes the condensation of iminoaspartate with dihydroxyacetone phosphate to form quinolinate. The chain is Quinolinate synthase from Escherichia coli (strain K12 / MC4100 / BW2952).